Consider the following 498-residue polypeptide: ATP synthase subunit beta, chloroplastic (498 aa).

Residue 172 to 179 (GGAGVGKT) coordinates ATP.

It belongs to the ATPase alpha/beta chains family. In terms of assembly, F-type ATPases have 2 components, CF(1) - the catalytic core - and CF(0) - the membrane proton channel. CF(1) has five subunits: alpha(3), beta(3), gamma(1), delta(1), epsilon(1). CF(0) has four main subunits: a(1), b(1), b'(1) and c(9-12).

Its subcellular location is the plastid. It is found in the chloroplast thylakoid membrane. The catalysed reaction is ATP + H2O + 4 H(+)(in) = ADP + phosphate + 5 H(+)(out). Functionally, produces ATP from ADP in the presence of a proton gradient across the membrane. The catalytic sites are hosted primarily by the beta subunits. The sequence is that of ATP synthase subunit beta, chloroplastic from Citrus sinensis (Sweet orange).